The following is a 244-amino-acid chain: Small ribosomal subunit protein uS3 (244 aa).

One can recognise a KH type-2 domain in the interval 39-107; the sequence is MRKFVMSELK…ETHLNIVEVR (69 aa). A disordered region spans residues 214–244; it reads ASERRALEGDAQGPASRERDRGDRRRERDNA. The span at 229 to 244 shows a compositional bias: basic and acidic residues; the sequence is SRERDRGDRRRERDNA.

The protein belongs to the universal ribosomal protein uS3 family. In terms of assembly, part of the 30S ribosomal subunit. Forms a tight complex with proteins S10 and S14.

Functionally, binds the lower part of the 30S subunit head. Binds mRNA in the 70S ribosome, positioning it for translation. The polypeptide is Small ribosomal subunit protein uS3 (Rhizobium etli (strain CIAT 652)).